The primary structure comprises 383 residues: Succinyl-diaminopimelate desuccinylase (383 aa).

H74 lines the Zn(2+) pocket. D76 is an active-site residue. D107 provides a ligand contact to Zn(2+). The Proton acceptor role is filled by E141. Zn(2+) contacts are provided by E142, E170, and H356.

Belongs to the peptidase M20A family. DapE subfamily. In terms of assembly, homodimer. Zn(2+) serves as cofactor. Co(2+) is required as a cofactor.

The enzyme catalyses N-succinyl-(2S,6S)-2,6-diaminopimelate + H2O = (2S,6S)-2,6-diaminopimelate + succinate. Its pathway is amino-acid biosynthesis; L-lysine biosynthesis via DAP pathway; LL-2,6-diaminopimelate from (S)-tetrahydrodipicolinate (succinylase route): step 3/3. Its function is as follows. Catalyzes the hydrolysis of N-succinyl-L,L-diaminopimelic acid (SDAP), forming succinate and LL-2,6-diaminopimelate (DAP), an intermediate involved in the bacterial biosynthesis of lysine and meso-diaminopimelic acid, an essential component of bacterial cell walls. The chain is Succinyl-diaminopimelate desuccinylase from Ralstonia nicotianae (strain ATCC BAA-1114 / GMI1000) (Ralstonia solanacearum).